A 326-amino-acid chain; its full sequence is NDRG-like protein (326 aa).

This sequence belongs to the NDRG family.

This Dictyostelium discoideum (Social amoeba) protein is NDRG-like protein.